The primary structure comprises 363 residues: D(1) dopamine receptor (363 aa).

Residues 1-24 (MAVLDLNLTTVIDSGFMESDRSVR) are Extracellular-facing. A glycan (N-linked (GlcNAc...) asparagine) is linked at Asn-7. A helical membrane pass occupies residues 25–45 (VLTGCFLSVLILSTLLGNTLV). Topologically, residues 46–61 (CAAVTKFRHLRSKVTN) are cytoplasmic. A helical transmembrane segment spans residues 62 to 81 (FFVISLAVSDLLVAVLVMPW). Residues 82–98 (KAVTEVAGFWPFGAFCD) are Extracellular-facing. A disulfide bridge links Cys-97 with Cys-187. The helical transmembrane segment at 99-120 (IWVAFDIMCSTASILNLCVISV) threads the bilayer. The Cytoplasmic portion of the chain corresponds to 121–139 (DRYWAISSPFRYERKMTPR). A helical membrane pass occupies residues 140 to 164 (VAFVMISGAWTLSVLISFIPVQLKW). Residues 165–194 (HKAQPIGFLEVNASRRDLPTDNCDSSLNRT) are Extracellular-facing. A helical transmembrane segment spans residues 195–219 (YAISSSLISFYIPVAIMIVTYTQIY). Residues 220 to 271 (RIAQKQIRRISALERAAESAQIRHDSMGSGSNMDLESSFKLSFKRETKVLKT) lie on the Cytoplasmic side of the membrane. The chain crosses the membrane as a helical span at residues 272–297 (LSVIMGVFVCCWLPFFILNCMVPFCK). The Extracellular segment spans residues 298–310 (RTSNGLPCISPTT). A helical membrane pass occupies residues 311 to 330 (FDVFVWFGWANSSLNPIIYA). At 331–363 (FNADFRRAFAILLGCQRLCPGSISMETPSLNKN) the chain is on the cytoplasmic side. Cys-345 is lipidated: S-palmitoyl cysteine.

It belongs to the G-protein coupled receptor 1 family. Retina.

The protein resides in the cell membrane. The protein localises to the cell projection. Its subcellular location is the cilium membrane. In terms of biological role, dopamine receptor whose activity is mediated by G proteins which activate adenylyl cyclase. Could be involved in growth hormone release. The polypeptide is D(1) dopamine receptor (Carassius auratus (Goldfish)).